We begin with the raw amino-acid sequence, 504 residues long: Maturase K (504 aa).

Belongs to the intron maturase 2 family. MatK subfamily.

The protein resides in the plastid. Its subcellular location is the chloroplast. Functionally, usually encoded in the trnK tRNA gene intron. Probably assists in splicing its own and other chloroplast group II introns. This is Maturase K from Lepidium campestre (Field pepperwort).